Here is a 590-residue protein sequence, read N- to C-terminus: Muscarinic acetylcholine receptor M3 (590 aa).

The Extracellular segment spans residues 1–67; it reads MTLHSNSTTS…DPLGGHTVWQ (67 aa). 4 N-linked (GlcNAc...) asparagine glycosylation sites follow: N6, N15, N41, and N48. Residues 68 to 91 form a helical membrane-spanning segment; that stretch reads VVFIAFLTGILALVTIIGNILVIV. The Cytoplasmic segment spans residues 92–104; the sequence is SFKVNKQLKTVNN. The chain crosses the membrane as a helical span at residues 105 to 130; the sequence is YFLLSLACADLIIGVISMNLFTTYII. The Extracellular portion of the chain corresponds to 131-142; the sequence is MNRWALGNLACD. The cysteines at positions 141 and 221 are disulfide-linked. Residues 143–164 form a helical membrane-spanning segment; it reads LWLAIDYVASNASVMNLLVISF. Topologically, residues 165–184 are cytoplasmic; that stretch reads DRYFSITRPLTYRAKRTTKR. Residues 185 to 206 form a helical membrane-spanning segment; it reads AGVMIGLAWVISFVLWAPAILF. The Extracellular segment spans residues 207 to 229; sequence WQYFVGKRTVPPGECFIQFLSEP. The chain crosses the membrane as a helical span at residues 230-252; it reads TITFGTAIAAFYMPVTIMTILYW. Residues 253-491 are Cytoplasmic-facing; the sequence is RIYKETEKRT…SLVKEKKAAQ (239 aa). The short motif at 275–281 is the Basolateral sorting signal element; sequence AETENFV. Residues 323–357 are disordered; it reads SSEQMDQDHSSSDSWNNNDAAASLENSASSDEEDI. The segment covering 334–345 has biased composition (low complexity); it reads SDSWNNNDAAAS. The residue at position 385 (S385) is a Phosphoserine. A helical transmembrane segment spans residues 492 to 514; that stretch reads TLSAILLAFIITWTPYNIMVLVN. Over 515 to 526 the chain is Extracellular; the sequence is TFCDSCIPKTFW. C517 and C520 form a disulfide bridge. Residues 527 to 546 traverse the membrane as a helical segment; that stretch reads NLGYWLCYINSTVNPVCYAL. Residues 547–590 are Cytoplasmic-facing; that stretch reads CNKTFRTTFKMLLLCQCDKKKRRKQQYQQRQSVIFHKRAPEQAL.

This sequence belongs to the G-protein coupled receptor 1 family. Muscarinic acetylcholine receptor subfamily. CHRM3 sub-subfamily. Homodimer; the dimers can form tetramers. Interacts with NALCN. Interacts with TMEM147.

Its subcellular location is the cell membrane. The protein localises to the postsynaptic cell membrane. The protein resides in the basolateral cell membrane. It is found in the endoplasmic reticulum membrane. In terms of biological role, the muscarinic acetylcholine receptor mediates various cellular responses, including inhibition of adenylate cyclase, breakdown of phosphoinositides and modulation of potassium channels through the action of G proteins. Primary transducing effect is Pi turnover. This Pongo pygmaeus (Bornean orangutan) protein is Muscarinic acetylcholine receptor M3 (CHRM3).